The sequence spans 161 residues: Cytochrome c-type biogenesis protein CcmE (161 aa).

Over 1 to 8 the chain is Cytoplasmic; that stretch reads MNPRRKKR. The helical; Signal-anchor for type II membrane protein transmembrane segment at 9–29 threads the bilayer; it reads LGLILALFVGISATVGLMLYA. The Periplasmic portion of the chain corresponds to 30-161; sequence LNQNMDLFYT…TEQQKQGTGQ (132 aa). Residues histidine 129 and tyrosine 133 each contribute to the heme site. The disordered stretch occupies residues 142-161; the sequence is MKKTHEPLQYTEQQKQGTGQ. Residues 151-161 show a composition bias toward polar residues; sequence YTEQQKQGTGQ.

Belongs to the CcmE/CycJ family.

It is found in the cell inner membrane. Heme chaperone required for the biogenesis of c-type cytochromes. Transiently binds heme delivered by CcmC and transfers the heme to apo-cytochromes in a process facilitated by CcmF and CcmH. The chain is Cytochrome c-type biogenesis protein CcmE from Aliivibrio fischeri (strain ATCC 700601 / ES114) (Vibrio fischeri).